Consider the following 210-residue polypeptide: Ribosomal RNA small subunit methyltransferase G (210 aa).

S-adenosyl-L-methionine contacts are provided by residues Gly75, Phe80, 98 to 100 (EST), 126 to 127 (AE), and Arg141.

The protein belongs to the methyltransferase superfamily. RNA methyltransferase RsmG family.

The protein resides in the cytoplasm. Its function is as follows. Specifically methylates the N7 position of a guanine in 16S rRNA. The chain is Ribosomal RNA small subunit methyltransferase G from Solibacter usitatus (strain Ellin6076).